Here is a 3890-residue protein sequence, read N- to C-terminus: Extracellular matrix-binding protein EbhB (3890 aa).

The signal sequence occupies residues 1 to 39 (MNYRDKIQKFSIRKYTVGTFSTVIATLVFLGFNTSQAHA). The span at 41–59 (ETNQPASVVKQKQQSNNEQ) shows a compositional bias: polar residues. Disordered regions lie at residues 41–152 (ETNQ…GNDN), 249–277 (MPQRQQTSRRSNRIQTRSVESRAAEPRSV), 1347–1372 (NEKAQAEAGGRPNYRTTGYSQSNATT), and 2418–2438 (TITPKAGTGHSVSSNPSTLTA). The segment covering 65–78 (SQVQNSQNSQNSQS) has biased composition (low complexity). A compositionally biased stretch (polar residues) spans 79-117 (LSATHENEQPNNSQANLVNQKVAQSSTTNDEQPASQNVN). The segment covering 130–140 (PDKEESKHKQN) has biased composition (basic and acidic residues). Composition is skewed to polar residues over residues 141–151 (ESQSANKNGND), 250–266 (PQRQQTSRRSNRIQTRS), 1360–1372 (YRTTGYSQSNATT), and 2427–2438 (HSVSSNPSTLTA). FIVAR domains are found at residues 2524–2580 (AKNH…VSDA), 2610–2666 (SKNN…ISDE), 2687–2750 (DTHA…VQSA), 2780–2836 (AKTK…IAAE), 2864–2919 (AKTQ…IRQN), 2947–3002 (AKNQ…INTN), 3030–3085 (AKTQ…INDK), 3154–3212 (AMTK…VNQK), 3280–3339 (AMTG…VNNA), 3407–3465 (AMGN…VNRA), 3533–3591 (AMGN…VTEA), 3659–3717 (AMNT…ITQK), and 3785–3843 (AMAN…VEAA).

The polypeptide is Extracellular matrix-binding protein EbhB (ebhB) (Staphylococcus aureus (strain N315)).